The primary structure comprises 180 residues: Large ribosomal subunit protein uL6 (180 aa).

Belongs to the universal ribosomal protein uL6 family. As to quaternary structure, part of the 50S ribosomal subunit.

Functionally, this protein binds to the 23S rRNA, and is important in its secondary structure. It is located near the subunit interface in the base of the L7/L12 stalk, and near the tRNA binding site of the peptidyltransferase center. The protein is Large ribosomal subunit protein uL6 of Salinispora tropica (strain ATCC BAA-916 / DSM 44818 / JCM 13857 / NBRC 105044 / CNB-440).